The primary structure comprises 434 residues: D-amino acid dehydrogenase (434 aa).

An FAD-binding site is contributed by 3–17; that stretch reads VVILGSGVVGVTSAW.

The protein belongs to the DadA oxidoreductase family. FAD is required as a cofactor.

The catalysed reaction is a D-alpha-amino acid + A + H2O = a 2-oxocarboxylate + AH2 + NH4(+). It participates in amino-acid degradation; D-alanine degradation; NH(3) and pyruvate from D-alanine: step 1/1. Its function is as follows. Oxidative deamination of D-amino acids. In Yersinia pseudotuberculosis serotype O:3 (strain YPIII), this protein is D-amino acid dehydrogenase.